The chain runs to 239 residues: Norbelladine 4'-O-methyltransferase 5 (239 aa).

S-adenosyl-L-methionine contacts are provided by residues V55, E77, G79–V80, S85, D103, and A132. Residue D155 participates in a divalent metal cation binding. S-adenosyl-L-methionine is bound at residue D157. A divalent metal cation is bound by residues D181 and N182.

This sequence belongs to the class I-like SAM-binding methyltransferase superfamily. Cation-dependent O-methyltransferase family. It depends on Mg(2+) as a cofactor.

The catalysed reaction is norbelladine + S-adenosyl-L-methionine = 4'-O-methylnorbelladine + S-adenosyl-L-homocysteine + H(+). It functions in the pathway alkaloid biosynthesis. Functionally, 4'-O-methyltransferase converting norbelladine to 4'-O-methylnorbelladine. 4'-O-methylnorbelladine is a precursor to all Amaryllidaceae alkaloids such as galanthamine, lycorine and haemanthamine, and including haemanthamine- and crinamine-type alkaloids, promising anticancer agents. The chain is Norbelladine 4'-O-methyltransferase 5 from Narcissus aff. pseudonarcissus MK-2014 (Daffodil).